Reading from the N-terminus, the 168-residue chain is MSPKTHTLSVLVEDKPGVLARVAALFSRRGFNIESLAVGATECKDRSRMTIVVSAEDTPLEQITKQLNKLINVIKIVEQDDEHSVSRELALIKVQADAGSRSQVIEAVNLFRANVIDVSPESLTVEATGNRGKLEALLRVLEPFGIREIAQSGMVSLSRGPRGIGTAK.

Residues 7-82 enclose the ACT domain; sequence TLSVLVEDKP…VIKIVEQDDE (76 aa).

Belongs to the acetolactate synthase small subunit family. Dimer of large and small chains.

The enzyme catalyses 2 pyruvate + H(+) = (2S)-2-acetolactate + CO2. Its pathway is amino-acid biosynthesis; L-isoleucine biosynthesis; L-isoleucine from 2-oxobutanoate: step 1/4. The protein operates within amino-acid biosynthesis; L-valine biosynthesis; L-valine from pyruvate: step 1/4. This is Acetolactate synthase small subunit (ilvH) from Mycobacterium bovis (strain ATCC BAA-935 / AF2122/97).